The following is a 146-amino-acid chain: NADH-ubiquinone oxidoreductase chain 6 (146 aa).

4 consecutive transmembrane segments (helical) span residues L10–V30, F41–L61, G75–T95, and A124–I144.

Belongs to the complex I subunit 6 family.

The protein resides in the mitochondrion membrane. The catalysed reaction is a ubiquinone + NADH + 5 H(+)(in) = a ubiquinol + NAD(+) + 4 H(+)(out). Functionally, core subunit of the mitochondrial membrane respiratory chain NADH dehydrogenase (Complex I) that is believed to belong to the minimal assembly required for catalysis. Complex I functions in the transfer of electrons from NADH to the respiratory chain. The immediate electron acceptor for the enzyme is believed to be ubiquinone. The chain is NADH-ubiquinone oxidoreductase chain 6 (ND6) from Debaryomyces hansenii (strain ATCC 36239 / CBS 767 / BCRC 21394 / JCM 1990 / NBRC 0083 / IGC 2968) (Yeast).